Reading from the N-terminus, the 4836-residue chain is E3 ubiquitin-protein ligase HERC2 (4836 aa).

Positions 58–90 (LPLRKDDGVDAQSGTKKEDLNDKEKKEEEETPA) are disordered. Basic and acidic residues predominate over residues 72 to 85 (TKKEDLNDKEKKEE). Thr-273 carries the phosphothreonine modification. One copy of the RCC1 1-1 repeat lies at 416 to 462 (PTSHKGSLQEVIGWGLIGWKYYANVIGPIQCEGLASLGVMQVACAEK). Residues 463–513 (RFLILSRNGRVYTQAYNSDMLAPQLVQGLASRNIVKIAAHSDGHHYLALAA) form an RCC1 1-2 repeat. Residues 514–569 (TGEVYSWGCGDGGRLGHGDTVPLEEPKVISAFSGKQAGKHVVHIACGSTYSAAITA) form an RCC1 1-3 repeat. An RCC1 1-4 repeat occupies 570 to 621 (EGELYTWGRGNYGRLGHGSSEDEAIPMLVAGLKGLKVIDVACGSGDAQTLAV). The RCC1 1-5 repeat unit spans residues 624 to 675 (NGQVWSWGDGDYGKLGRGGSDGCKTPKLIEKLQDLDVIKVRCGSQFSIALTK). Position 648 is a phosphothreonine (Thr-648). The RCC1 1-6 repeat unit spans residues 676-727 (DGQVYSWGKGDNQRLGHGTEEHVRYPKLLEGLQGKKVIDVAAGSTHCLALTE). The stretch at 729–779 (SEVHSWGSNDQCQHFDTLRVTKPEPTALPGLDSKHIVGIACGPAQSFAWSS) is one RCC1 1-7 repeat. Residues 948–981 (ALNAAITAEIQDIEAKKEAQKEKEIDEQEASAST) are a coiled coil. One can recognise a Cytochrome b5 heme-binding domain in the interval 1208–1284 (VTLIRKADLE…MHAFCVGQYL (77 aa)). A Phosphoserine modification is found at Ser-1578. Positions 1860–1933 (SGPELAAMMK…KYDLKLVELP (74 aa)) constitute an MIB/HERC2 domain. Position 1943 is a phosphoserine (Ser-1943). Thr-1945 carries the phosphothreonine modification. Positions 2351–2376 (GTGTLQTDDGAAASPDLGDMSPEGPQ) are disordered. Phosphoserine is present on Ser-2455. Residues 2555–2631 (RADFLSNDDY…RYIHVELIGY (77 aa)) enclose the CPH domain. Residues 2704–2756 (HPGVTCDGCQTFPINGSRFKCRNCDDFDFCETCFKTKKHNTRHTFGRINEPGQ) form a ZZ-type zinc finger. The Zn(2+) site is built by Cys-2709, Cys-2712, Cys-2724, Cys-2727, Cys-2733, Cys-2736, His-2742, and His-2746. The 178-residue stretch at 2760–2937 (FCGRSGKQLK…ASDNEEEEDD (178 aa)) folds into the DOC domain. The tract at residues 2928 to 2947 (ASDNEEEEDDKGSTGSLIRK) is disordered. Ser-2929 carries the post-translational modification Phosphoserine. An RCC1 2-1 repeat occupies 2959–3010 (RTKVFVWGLNDKDQLGGLKGSKIKVPSFSETLSALNVVQVAGGSKSLFAVTV). An RCC1 2-2 repeat occupies 3011–3065 (EGKVYSCGEATNGRLGLGMSSGTVPIPRQITALSSYVVKKVAVHSGGRHATALTV). An RCC1 2-3 repeat occupies 3066–3117 (DGKVFSWGEGDDGKLGHFSRMNCDKPRLIEALKTKRIRDIACGSSHSAALTS). The RCC1 2-4 repeat unit spans residues 3119-3169 (GELYTWGLGEYGRLGHGDNTTQLKPKMVKVLLGHRVIQVACGSRDAQTLAL). The RCC1 2-5 repeat unit spans residues 3172 to 3223 (EGLVFSWGDGDFGKLGRGGSEGCNIPQNIERLNGQGVCQIECGAQFSLALTK). One copy of the RCC1 2-6 repeat lies at 3225–3275 (GVVWTWGKGDYFRLGHGSDVHVRKPQVVEGLRGKKIVHVAVGALHCLAVTD). The stretch at 3276 to 3327 (SGQVYAWGDNDHGQQGNGTTTVNRKPTLVQGLEGQKITRVACGSSHSVAWTT) is one RCC1 2-7 repeat. 3 disordered regions span residues 3479–3499 (DAVT…RPFI), 3517–3537 (KTKE…QSLD), and 3604–3632 (SQSG…SGTV). A compositionally biased stretch (low complexity) spans 3480–3495 (AVTPSAVTPSAPSASS). Composition is skewed to polar residues over residues 3604 to 3613 (SQSGRLSSQP) and 3620 to 3631 (HPYTDDTSTSGT). The RCC1 3-1 repeat unit spans residues 3953–4004 (SGTIYGWGHNHRGQLGGIEGAKVKVPTPCEALATLRPVQLIGGEQTLFAVTA). The stretch at 4006 to 4058 (GKLYATGYGAGGRLGIGGTESVSTPTLLESIQHVFIKKVAVNSGGKHCLALSS) is one RCC1 3-2 repeat. One copy of the RCC1 3-3 repeat lies at 4060 to 4110 (GEVYSWGEAEDGKLGHGNRSPCDRPRVIESLRGIEVVDVAAGGAHSACVTA). Residues 4112–4164 (GDLYTWGKGRYGRLGHSDSEDQLKPKLVEALQGHRVIDIACGSGDAQTLCLTD) form an RCC1 3-4 repeat. The stretch at 4166–4216 (DTVWSWGDGDYGKLGRGGSDGCKVPMKIDSLTGLGVVKVECGSQFSVALTK) is one RCC1 3-5 repeat. One copy of the RCC1 3-6 repeat lies at 4218–4268 (GAVYTWGKGDYHRLGHGSDDHVRRPRQVQGLQGKKVIAIATGSLHCVCCTE). The RCC1 3-7 repeat unit spans residues 4270–4320 (GEVYTWGDNDEGQLGDGTTNAIQRPRLVAALQGKKVNRVACGSAHTLAWST). The 338-residue stretch at 4459–4796 (DSLLLPHRVW…IHFCKSIDTD (338 aa)) folds into the HECT domain. Cys-4764 functions as the Glycyl thioester intermediate in the catalytic mechanism. The segment at 4806–4836 (EPAADDSSEDSDNEDADSFASDSTQDYLTGH) is disordered. The segment covering 4808 to 4822 (AADDSSEDSDNEDAD) has biased composition (acidic residues). Ser-4812, Ser-4813, and Ser-4816 each carry phosphoserine. Thr-4829 is modified (phosphothreonine).

Interacts (when phosphorylated at Thr-4829 and sumoylated) with RNF8 (via FHA domain); this interaction increases after ionising radiation (IR) treatment. Interacts with XPA. Interacts with NEURL4. Via its interaction with NEURL4, may indirectly interact with CCP110 and CEP97. Phosphorylation at Thr-4829 is required for interaction with RNF8. Post-translationally, sumoylated with SUMO1 by PIAS4 in response to double-strand breaks (DSBs), promoting the interaction with RNF8. Highest levels are found in brain and testis with lower levels in heart, lung, liver, skeletal muscle and kidney. Little expression detected in spleen.

It localises to the cytoplasm. The protein localises to the cytoskeleton. Its subcellular location is the microtubule organizing center. The protein resides in the centrosome. It is found in the centriole. It localises to the nucleus. It carries out the reaction S-ubiquitinyl-[E2 ubiquitin-conjugating enzyme]-L-cysteine + [acceptor protein]-L-lysine = [E2 ubiquitin-conjugating enzyme]-L-cysteine + N(6)-ubiquitinyl-[acceptor protein]-L-lysine.. Its pathway is protein modification; protein ubiquitination. Functionally, E3 ubiquitin-protein ligase that regulates ubiquitin-dependent retention of repair proteins on damaged chromosomes. Recruited to sites of DNA damage in response to ionizing radiation (IR) and facilitates the assembly of UBE2N and RNF8 promoting DNA damage-induced formation of 'Lys-63'-linked ubiquitin chains. Acts as a mediator of binding specificity between UBE2N and RNF8. Involved in the maintenance of RNF168 levels. E3 ubiquitin-protein ligase that promotes the ubiquitination and proteasomal degradation of XPA which influences the circadian oscillation of DNA excision repair activity. By controlling the steady-state expression of the IGF1R receptor, indirectly regulates the insulin-like growth factor receptor signaling pathway. Also modulates iron metabolism by regulating the basal turnover of FBXL5. The sequence is that of E3 ubiquitin-protein ligase HERC2 from Mus musculus (Mouse).